Here is a 289-residue protein sequence, read N- to C-terminus: Bifunctional protein FolD 2 (289 aa).

Residues 162 to 164, Ser187, and Ile228 contribute to the NADP(+) site; that span reads GRS.

Belongs to the tetrahydrofolate dehydrogenase/cyclohydrolase family. As to quaternary structure, homodimer.

It catalyses the reaction (6R)-5,10-methylene-5,6,7,8-tetrahydrofolate + NADP(+) = (6R)-5,10-methenyltetrahydrofolate + NADPH. It carries out the reaction (6R)-5,10-methenyltetrahydrofolate + H2O = (6R)-10-formyltetrahydrofolate + H(+). It functions in the pathway one-carbon metabolism; tetrahydrofolate interconversion. In terms of biological role, catalyzes the oxidation of 5,10-methylenetetrahydrofolate to 5,10-methenyltetrahydrofolate and then the hydrolysis of 5,10-methenyltetrahydrofolate to 10-formyltetrahydrofolate. In Deinococcus geothermalis (strain DSM 11300 / CIP 105573 / AG-3a), this protein is Bifunctional protein FolD 2.